Reading from the N-terminus, the 232-residue chain is Phosphoribosylformylglycinamidine synthase subunit PurQ (232 aa).

The region spanning 3–232 is the Glutamine amidotransferase type-1 domain; that stretch reads FAVIVFPGSN…SLVASALAVV (230 aa). Cys86 functions as the Nucleophile in the catalytic mechanism. Active-site residues include His203 and Glu205.

Part of the FGAM synthase complex composed of 1 PurL, 1 PurQ and 2 PurS subunits.

The protein localises to the cytoplasm. It catalyses the reaction N(2)-formyl-N(1)-(5-phospho-beta-D-ribosyl)glycinamide + L-glutamine + ATP + H2O = 2-formamido-N(1)-(5-O-phospho-beta-D-ribosyl)acetamidine + L-glutamate + ADP + phosphate + H(+). The catalysed reaction is L-glutamine + H2O = L-glutamate + NH4(+). It functions in the pathway purine metabolism; IMP biosynthesis via de novo pathway; 5-amino-1-(5-phospho-D-ribosyl)imidazole from N(2)-formyl-N(1)-(5-phospho-D-ribosyl)glycinamide: step 1/2. Part of the phosphoribosylformylglycinamidine synthase complex involved in the purines biosynthetic pathway. Catalyzes the ATP-dependent conversion of formylglycinamide ribonucleotide (FGAR) and glutamine to yield formylglycinamidine ribonucleotide (FGAM) and glutamate. The FGAM synthase complex is composed of three subunits. PurQ produces an ammonia molecule by converting glutamine to glutamate. PurL transfers the ammonia molecule to FGAR to form FGAM in an ATP-dependent manner. PurS interacts with PurQ and PurL and is thought to assist in the transfer of the ammonia molecule from PurQ to PurL. The protein is Phosphoribosylformylglycinamidine synthase subunit PurQ of Gloeobacter violaceus (strain ATCC 29082 / PCC 7421).